A 316-amino-acid chain; its full sequence is MTSTPADALRELEARVRDLEATAERTGQNLDAALAPLRTQLETLRREHAAGLSRWDRVQLARTPGRPTALDYVDRLCSDWTELHGDRRFGDDPALIGGPARWQGRPVMLLLQQKGRDTKTKIKRRFGSANPEGYRKAIRLMDLADRFGLPVVSLIDTQGAYPGLEAEERGQGWAIAESIQRMVRLRVPAVCAVIGEGGSGGALAIGVGNRVLIQENAWYSVISPEGAASILWRDAAQAPLAAEALRVTAADLLDMGIVEEVVPEPPGGAHLDMDAAAEALGSVISRHLDDLSALTPDDLLAQRAARFRSLGAFEER.

One can recognise a CoA carboxyltransferase C-terminal domain in the interval 36–290; the sequence is PLRTQLETLR…GSVISRHLDD (255 aa).

Belongs to the AccA family. Acetyl-CoA carboxylase is a heterohexamer composed of biotin carboxyl carrier protein (AccB), biotin carboxylase (AccC) and two subunits each of ACCase subunit alpha (AccA) and ACCase subunit beta (AccD).

The protein localises to the cytoplasm. The enzyme catalyses N(6)-carboxybiotinyl-L-lysyl-[protein] + acetyl-CoA = N(6)-biotinyl-L-lysyl-[protein] + malonyl-CoA. Its pathway is lipid metabolism; malonyl-CoA biosynthesis; malonyl-CoA from acetyl-CoA: step 1/1. Functionally, component of the acetyl coenzyme A carboxylase (ACC) complex. First, biotin carboxylase catalyzes the carboxylation of biotin on its carrier protein (BCCP) and then the CO(2) group is transferred by the carboxyltransferase to acetyl-CoA to form malonyl-CoA. The protein is Acetyl-coenzyme A carboxylase carboxyl transferase subunit alpha of Deinococcus radiodurans (strain ATCC 13939 / DSM 20539 / JCM 16871 / CCUG 27074 / LMG 4051 / NBRC 15346 / NCIMB 9279 / VKM B-1422 / R1).